The sequence spans 110 residues: ATP synthase subunit c (110 aa).

3 helical membrane-spanning segments follow: residues 4 to 24, 37 to 57, and 81 to 101; these read FFVI…VFAA, ATAG…AGMG, and FIVG…FVLI.

It belongs to the ATPase C chain family. As to quaternary structure, F-type ATPases have 2 components, F(1) - the catalytic core - and F(0) - the membrane proton channel. F(1) has five subunits: alpha(3), beta(3), gamma(1), delta(1), epsilon(1). F(0) has three main subunits: a(1), b(2) and c(10-14). The alpha and beta chains form an alternating ring which encloses part of the gamma chain. F(1) is attached to F(0) by a central stalk formed by the gamma and epsilon chains, while a peripheral stalk is formed by the delta and b chains.

It is found in the cell inner membrane. F(1)F(0) ATP synthase produces ATP from ADP in the presence of a proton or sodium gradient. F-type ATPases consist of two structural domains, F(1) containing the extramembraneous catalytic core and F(0) containing the membrane proton channel, linked together by a central stalk and a peripheral stalk. During catalysis, ATP synthesis in the catalytic domain of F(1) is coupled via a rotary mechanism of the central stalk subunits to proton translocation. Its function is as follows. Key component of the F(0) channel; it plays a direct role in translocation across the membrane. A homomeric c-ring of between 10-14 subunits forms the central stalk rotor element with the F(1) delta and epsilon subunits. The sequence is that of ATP synthase subunit c from Thermodesulfovibrio yellowstonii (strain ATCC 51303 / DSM 11347 / YP87).